A 233-amino-acid polypeptide reads, in one-letter code: Metallo-beta-lactamase domain-containing protein 1 (233 aa).

Positions 96, 98, 100, 101, 152, 174, and 213 each coordinate Zn(2+).

Belongs to the metallo-beta-lactamase superfamily. Glyoxalase II family. As to quaternary structure, homodimer. The cofactor is Zn(2+).

Its subcellular location is the cytoplasm. The protein localises to the cytosol. It localises to the nucleus. It catalyses the reaction a ribonucleotidyl-ribonucleotide-RNA + H2O = a 3'-end ribonucleotide-RNA + a 5'-end 5'-phospho-ribonucleoside-RNA + H(+). Its function is as follows. Endoribonuclease that catalyzes the hydrolysis of histone-coding pre-mRNA 3'-end. Involved in histone pre-mRNA processing during the S-phase of the cell cycle, which is required for entering/progressing through S-phase. Cleaves histone pre-mRNA at a major and a minor cleavage site after the 5'-ACCCA-3' and the 5'-ACCCACA-3' sequence, respectively, and located downstream of the stem-loop. May require the presence of the HDE element located at the histone pre-RNA 3'-end to avoid non-specific cleavage. The polypeptide is Metallo-beta-lactamase domain-containing protein 1 (mblac1) (Xenopus laevis (African clawed frog)).